Here is a 148-residue protein sequence, read N- to C-terminus: Multiprotein-bridging factor 1 (148 aa).

Residues Met1–Ser97 form a disordered region. An HTH cro/C1-type domain is found at Ile82–Gln136. The H-T-H motif DNA-binding region spans Gln93 to Ser112.

Belongs to the MBF1 family.

Its function is as follows. Transcriptional coactivator that stimulates GCN4-dependent transcriptional activity by bridging the DNA-binding region of GCN4 and TBP (SPT15), thereby recruiting TBP to GCN4-bound promoters. Involved in induction of the ribosome quality control (RQC) pathway; a pathway that degrades nascent peptide chains during problematic translation. Required to prevent stalled ribosomes from frameshifting. The protein is Multiprotein-bridging factor 1 (mbf1) of Schizosaccharomyces pombe (strain 972 / ATCC 24843) (Fission yeast).